The primary structure comprises 269 residues: Neurotrophic factor BDNF precursor form (269 aa).

The N-terminal stretch at Met1–Ala18 is a signal peptide. Positions Ala19–Arg150 are excised as a propeptide. Disordered regions lie at residues Ala39–Leu61 and Ala82–Ala104. N-linked (GlcNAc...) asparagine glycosylation occurs at Asn143. Disulfide bonds link Cys163–Cys230, Cys208–Cys259, and Cys218–Cys261.

The protein belongs to the NGF-beta family.

Its function is as follows. BDNF promotes the survival of neuronal populations that are all located either in the central nervous system or directly connected to it. The chain is Neurotrophic factor BDNF precursor form (bdnf) from Xiphophorus maculatus (Southern platyfish).